A 981-amino-acid polypeptide reads, in one-letter code: MEKLDKIRMSQKLSCWQHILTTLGTSSKTEQEWNTFFKGFLESWRKPYCIQTSCDPSIPLRKELLVRPRKALQENPHGPGSTLPESPVFLEPINSTAPREHPSPSKSHSTGSTGCDPGNGERSPSVSNKNSKYKNPGNSKYAKIWKRSNNHTTSIFSKAQISKRRDKLSSTKKRPDTCAPTDDSRKNREPRACAPNKNIFKTRETNAPNLTKNSCALPNVLILSPNSASKITQRGHSVGQTQDYKASPGKIIKRVPRYSLQCLKKKTEKVHNKIMDKPKNKQQPQTPPPFLLNNEYTESSDDSDDQLPLSELSQKMKSNKLNTLFLSRNEDCSPAPEKVKLKGERPAQNKKEQLTWEPSILTNLTDLGKQVAEPLRKSVKKSAKQQKPRVRAPPQGKKTLPQLQTGLKTQDKQSTHEMISEQAKTISEASGQQTSQVQSSLSPNNIRNNSVKLISAKTLMPAQRSQDYSPNKMQVGQPLGFAIELPSPVDGKEASVEIDTQLVHTSKFLENMTRPSTVEVHKFDLMDIFMGENEKLDYEYDDDDVLSVAASWNGLDDENVPEDEPRKEAKTAEQLPKPEPSTETLKPIEKENAQKMQSIKSFQIPKLNAKNLKTQPSVMRSIYENEELEKNKVLAKPAPPSLVHQPLAESNRNQRDEATAARRAKETFPVFAPLYRVAPESAATLVSANSQQVIPQVYFSTSNQDGVNWIKDVFGIRCMQSVDNKCISINCDHTMNSLGEVQKRLMRMDEDTLLSLYRQTIRSFFLFQTYYTSFVDIFKFRNLWQYLLIMLVDCRLYKSISAPLLAHVYEALSKCGMQKEAVKRIMEHVWLPCKAHKYRDLMLTTLNILSNANWEDYCDKLTQLDKDYNFEIPHKNLITILKSSVDCSDKFANALKLITLHPNSIRTNETIMSILSNASKSYSYMHNESASASQGPPGAASFLAPPAAIQPPHTTVPNFGYLPNPSFHYSNEYAINIHNFD.

The tract at residues 1–60 is required for interaction with rhi/rhino; sequence MEKLDKIRMSQKLSCWQHILTTLGTSSKTEQEWNTFFKGFLESWRKPYCIQTSCDPSIPL. Disordered stretches follow at residues 72–195, 274–307, 327–352, 375–446, 554–586, and 642–662; these read LQEN…ACAP, IMDKPKNKQQPQTPPPFLLNNEYTESSDDSDDQL, SRNEDCSPAPEKVKLKGERPAQNKKE, LRKS…PNNI, GLDDENVPEDEPRKEAKTAEQLPKPEPSTETLK, and LVHQPLAESNRNQRDEATAAR. 2 stretches are compositionally biased toward polar residues: residues 104 to 113 and 150 to 160; these read PSKSHSTGST and NHTTSIFSKAQ. Over residues 167–191 the composition is skewed to basic and acidic residues; it reads KLSSTKKRPDTCAPTDDSRKNREPR. Positions 337-352 are enriched in basic and acidic residues; it reads EKVKLKGERPAQNKKE. The span at 377–390 shows a compositional bias: basic residues; that stretch reads KSVKKSAKQQKPRV. Residues 409-419 show a composition bias toward basic and acidic residues; the sequence is TQDKQSTHEMI. Over residues 422 to 446 the composition is skewed to polar residues; it reads QAKTISEASGQQTSQVQSSLSPNNI. Residues 652 to 662 are compositionally biased toward basic and acidic residues; that stretch reads RNQRDEATAAR.

Component of the Rhino-Deadlock-Cutoff (RDC) complex, composed of rhi/rhino, del/deadlock and cuff/cutoff. Interacts (via N-terminus) with rhi/rhino (via C-terminus); this interaction is direct. Interacts (via C-terminus) with cuff/cutoff; this interaction is direct.

Its subcellular location is the nucleus. The protein localises to the cytoplasm. It localises to the cytoskeleton. It is found in the microtubule organizing center. The protein resides in the centrosome. Its subcellular location is the chromosome. Functionally, developmental protein involved in oogenesis. Required for germline maintenance, stability of mitotic spindles, localization of patterning determinants, oocyte growth and fusome biogenesis in males and females. Also required for dorso-ventral and antero-posterior patterning of oocyte and eggshell. May be involved in microtubule function during oogenesis. Part of a rhi-dependent transcription machinery that enables the generation of piRNA precursors from heterochromatin while maintaining the suppression of transposon-encoded promoters and enhancers. Component of the RDC complex (rhi, del and cuff) which binds to repressive H3K9me3 marks in the piRNA clusters. RDC promotes the bidirectional transcription of piRNA clusters at these sites by interacting with Moonshiner which forms a complex with the transcription initiation factors TfIIA-S and Trf2. This mechanism allows transcription to occur in piRNA clusters despite the lack of proper promoter elements and in the presence of the repressive H3K9me3 mark. As part of the RDC complex, involved in suppression of splicing. This chain is Protein deadlock (del), found in Drosophila melanogaster (Fruit fly).